The following is a 146-amino-acid chain: Prefoldin subunit alpha (146 aa).

This sequence belongs to the prefoldin alpha subunit family. As to quaternary structure, heterohexamer of two alpha and four beta subunits.

The protein localises to the cytoplasm. Functionally, molecular chaperone capable of stabilizing a range of proteins. Seems to fulfill an ATP-independent, HSP70-like function in archaeal de novo protein folding. The protein is Prefoldin subunit alpha of Methanococcus vannielii (strain ATCC 35089 / DSM 1224 / JCM 13029 / OCM 148 / SB).